Here is a 404-residue protein sequence, read N- to C-terminus: Cysteine desulfurase IscS (404 aa).

Residues Ala-75–Thr-76, Asn-155, Gln-183, and Ser-203–His-205 each bind pyridoxal 5'-phosphate. Lys-206 carries the post-translational modification N6-(pyridoxal phosphate)lysine. Thr-243 is a binding site for pyridoxal 5'-phosphate. The active-site Cysteine persulfide intermediate is the Cys-328. Residue Cys-328 coordinates [2Fe-2S] cluster.

Belongs to the class-V pyridoxal-phosphate-dependent aminotransferase family. NifS/IscS subfamily. Homodimer. Forms a heterotetramer with IscU, interacts with other sulfur acceptors. Pyridoxal 5'-phosphate serves as cofactor.

The protein localises to the cytoplasm. The catalysed reaction is (sulfur carrier)-H + L-cysteine = (sulfur carrier)-SH + L-alanine. It participates in cofactor biosynthesis; iron-sulfur cluster biosynthesis. Its function is as follows. Master enzyme that delivers sulfur to a number of partners involved in Fe-S cluster assembly, tRNA modification or cofactor biosynthesis. Catalyzes the removal of elemental sulfur atoms from cysteine to produce alanine. Functions as a sulfur delivery protein for Fe-S cluster synthesis onto IscU, an Fe-S scaffold assembly protein, as well as other S acceptor proteins. This is Cysteine desulfurase IscS from Edwardsiella ictaluri (strain 93-146).